We begin with the raw amino-acid sequence, 362 residues long: Holliday junction branch migration complex subunit RuvB (362 aa).

Residues 4-186 (PDRPQRLVEQ…FGIPLRMQFY (183 aa)) form a large ATPase domain (RuvB-L) region. Residues isoleucine 25, arginine 26, glycine 67, lysine 70, threonine 71, threonine 72, 133-135 (EDF), arginine 176, tyrosine 186, and arginine 223 each bind ATP. Residue threonine 71 coordinates Mg(2+). The small ATPAse domain (RuvB-S) stretch occupies residues 187–257 (EPEELQLIVA…AAGGALTRLE (71 aa)). Residues 260–362 (RLGFDAMDRR…GTPEGEGEDV (103 aa)) are head domain (RuvB-H). 3 residues coordinate DNA: arginine 296, arginine 315, and arginine 320.

The protein belongs to the RuvB family. In terms of assembly, homohexamer. Forms an RuvA(8)-RuvB(12)-Holliday junction (HJ) complex. HJ DNA is sandwiched between 2 RuvA tetramers; dsDNA enters through RuvA and exits via RuvB. An RuvB hexamer assembles on each DNA strand where it exits the tetramer. Each RuvB hexamer is contacted by two RuvA subunits (via domain III) on 2 adjacent RuvB subunits; this complex drives branch migration. In the full resolvosome a probable DNA-RuvA(4)-RuvB(12)-RuvC(2) complex forms which resolves the HJ.

It localises to the cytoplasm. It carries out the reaction ATP + H2O = ADP + phosphate + H(+). The RuvA-RuvB-RuvC complex processes Holliday junction (HJ) DNA during genetic recombination and DNA repair, while the RuvA-RuvB complex plays an important role in the rescue of blocked DNA replication forks via replication fork reversal (RFR). RuvA specifically binds to HJ cruciform DNA, conferring on it an open structure. The RuvB hexamer acts as an ATP-dependent pump, pulling dsDNA into and through the RuvAB complex. RuvB forms 2 homohexamers on either side of HJ DNA bound by 1 or 2 RuvA tetramers; 4 subunits per hexamer contact DNA at a time. Coordinated motions by a converter formed by DNA-disengaged RuvB subunits stimulates ATP hydrolysis and nucleotide exchange. Immobilization of the converter enables RuvB to convert the ATP-contained energy into a lever motion, pulling 2 nucleotides of DNA out of the RuvA tetramer per ATP hydrolyzed, thus driving DNA branch migration. The RuvB motors rotate together with the DNA substrate, which together with the progressing nucleotide cycle form the mechanistic basis for DNA recombination by continuous HJ branch migration. Branch migration allows RuvC to scan DNA until it finds its consensus sequence, where it cleaves and resolves cruciform DNA. The polypeptide is Holliday junction branch migration complex subunit RuvB (Rhodospirillum centenum (strain ATCC 51521 / SW)).